The sequence spans 1197 residues: Pleckstrin homology domain-containing family A member 7 (1197 aa).

WW domains are found at residues 8–41 (DTLP…HPRT) and 53–86 (SDLP…HPVT). The disordered stretch occupies residues 98–148 (LQDQPGGRMLKQPSSTISEASTTVTTSTVDSTSGSKGSRSSGRVHSFGKRD). Low complexity predominate over residues 111-140 (SSTISEASTTVTTSTVDSTSGSKGSRSSGR). The region spanning 158–257 (PVVVRGWLYK…WVRAMNQAAL (100 aa)) is the PH domain. Disordered stretches follow at residues 348–384 (PGST…NGMP), 423–467 (LVST…QLPS), and 508–577 (FRHG…TVRP). The segment covering 528–546 (VSSTRNNSDVSRSVSVPPT) has biased composition (low complexity). Over residues 568 to 577 (TPAERVTVRP) the composition is skewed to basic and acidic residues. Residues 678 to 799 (DKILQELEFR…RIEDVMTGLS (122 aa)) are a coiled coil. 2 disordered regions span residues 830–928 (SRCM…SYSN) and 1032–1064 (HQRA…SDPG). The segment covering 913–924 (RQSDERKRDRES) has biased composition (basic and acidic residues). Residues 1016–1044 (QRVRMSVEEQLERMKRHQRALVRERKRNL) adopt a coiled-coil conformation. Residues 1032–1043 (HQRALVRERKRN) show a composition bias toward basic residues.

The protein resides in the cell junction. It localises to the adherens junction. The protein localises to the cytoplasm. Its subcellular location is the cytoskeleton. It is found in the microtubule organizing center. The protein resides in the centrosome. Its function is as follows. Required for zonula adherens biogenesis and maintenance. This is Pleckstrin homology domain-containing family A member 7 (plekha7) from Danio rerio (Zebrafish).